A 271-amino-acid chain; its full sequence is Proteasome inhibitor PI31 subunit (271 aa).

Ala-2 is subject to N-acetylalanine. The tract at residues 2–150 (AGLEVLFASA…PIHEQWEKAN (149 aa)) is important for homodimerization and interaction with FBXO7. Ser-153 carries the post-translational modification Phosphoserine. At Arg-205 the chain carries Omega-N-methylarginine. Residue Arg-219 is modified to Asymmetric dimethylarginine. Residues 222-271 (IDPSSGLPNRLPPGAVPPGARFDPFGPIGTSPPGPNPDHLPPPGYDDMYL) form a disordered region. Arg-231 bears the Omega-N-methylarginine mark. Positions 251–265 (TSPPGPNPDHLPPPG) are enriched in pro residues. The residue at position 252 (Ser-252) is a Phosphoserine.

The protein belongs to the proteasome inhibitor PI31 family. Monomer and homodimer. Interacts with FBXO7.

The protein localises to the cytoplasm. It is found in the endoplasmic reticulum. In terms of biological role, plays an important role in control of proteasome function. Inhibits the hydrolysis of protein and peptide substrates by the 20S proteasome. Also inhibits the activation of the proteasome by the proteasome regulatory proteins PA700 and PA28. The chain is Proteasome inhibitor PI31 subunit (PSMF1) from Pongo abelii (Sumatran orangutan).